We begin with the raw amino-acid sequence, 223 residues long: Serum amyloid P-component (223 aa).

Residues 1–19 (MDKMLFWVSVFTIFLDVFA) form the signal peptide. One can recognise a Pentraxin (PTX) domain in the interval 24 to 223 (DKKVFVFPRE…YVIIKPRVWD (200 aa)). C55 and C114 are disulfide-bonded. Positions 77, 78, 155, 156, 157, and 167 each coordinate Ca(2+). A glycan (N-linked (GlcNAc...) asparagine) is linked at N198.

It belongs to the pentraxin family. As to quaternary structure, homopentamer. Pentraxin (or pentaxin) have a discoid arrangement of 5 non-covalently bound subunits. Ca(2+) is required as a cofactor.

The protein localises to the secreted. The chain is Serum amyloid P-component (PTX2) from Cavia porcellus (Guinea pig).